Consider the following 396-residue polypeptide: Sialyltransferase-like protein 2 (396 aa).

The Cytoplasmic segment spans residues 1–6 (MKRRHL). The chain crosses the membrane as a helical; Signal-anchor for type II membrane protein span at residues 7–23 (PPVLVLLLLSILSLSFR). Over 24–396 (RRLLVLQGPP…FTVPPVRLHR (373 aa)) the chain is Lumenal. 3 N-linked (GlcNAc...) asparagine glycosylation sites follow: asparagine 72, asparagine 260, and asparagine 304.

Belongs to the glycosyltransferase 29 family.

It localises to the golgi apparatus membrane. In terms of biological role, does not possess sialyltransferase-like activity in vitro. In Oryza sativa subsp. indica (Rice), this protein is Sialyltransferase-like protein 2.